Reading from the N-terminus, the 455-residue chain is Argininosuccinate lyase (455 aa).

It belongs to the lyase 1 family. Argininosuccinate lyase subfamily.

The protein localises to the cytoplasm. It catalyses the reaction 2-(N(omega)-L-arginino)succinate = fumarate + L-arginine. The protein operates within amino-acid biosynthesis; L-arginine biosynthesis; L-arginine from L-ornithine and carbamoyl phosphate: step 3/3. The sequence is that of Argininosuccinate lyase from Shewanella sp. (strain MR-4).